We begin with the raw amino-acid sequence, 290 residues long: Formamidopyrimidine-DNA glycosylase (290 aa).

Pro-2 (schiff-base intermediate with DNA) is an active-site residue. The active-site Proton donor is Glu-3. Lys-58 functions as the Proton donor; for beta-elimination activity in the catalytic mechanism. DNA contacts are provided by His-98, Arg-126, and Arg-171. The FPG-type zinc-finger motif lies at 256-290 (FVYDRAGLPCRVCATPVRQIVQGQRSTFYCPKCQH). Catalysis depends on Arg-280, which acts as the Proton donor; for delta-elimination activity.

This sequence belongs to the FPG family. Monomer. The cofactor is Zn(2+).

It carries out the reaction Hydrolysis of DNA containing ring-opened 7-methylguanine residues, releasing 2,6-diamino-4-hydroxy-5-(N-methyl)formamidopyrimidine.. The enzyme catalyses 2'-deoxyribonucleotide-(2'-deoxyribose 5'-phosphate)-2'-deoxyribonucleotide-DNA = a 3'-end 2'-deoxyribonucleotide-(2,3-dehydro-2,3-deoxyribose 5'-phosphate)-DNA + a 5'-end 5'-phospho-2'-deoxyribonucleoside-DNA + H(+). Involved in base excision repair of DNA damaged by oxidation or by mutagenic agents. Acts as a DNA glycosylase that recognizes and removes damaged bases. Has a preference for oxidized purines, such as 7,8-dihydro-8-oxoguanine (8-oxoG). Has AP (apurinic/apyrimidinic) lyase activity and introduces nicks in the DNA strand. Cleaves the DNA backbone by beta-delta elimination to generate a single-strand break at the site of the removed base with both 3'- and 5'-phosphates. The polypeptide is Formamidopyrimidine-DNA glycosylase (Cupriavidus taiwanensis (strain DSM 17343 / BCRC 17206 / CCUG 44338 / CIP 107171 / LMG 19424 / R1) (Ralstonia taiwanensis (strain LMG 19424))).